Reading from the N-terminus, the 36-residue chain is Photosystem I reaction center subunit VIII (36 aa).

The helical transmembrane segment at 4–24 (FSLPSILVPLVGLVLPAIAMA) threads the bilayer.

It belongs to the PsaI family.

It is found in the plastid. Its subcellular location is the chloroplast thylakoid membrane. Its function is as follows. May help in the organization of the PsaL subunit. The chain is Photosystem I reaction center subunit VIII from Piper cenocladum (Ant piper).